Reading from the N-terminus, the 880-residue chain is Alanine--tRNA ligase (880 aa).

It belongs to the class-II aminoacyl-tRNA synthetase family.

The protein resides in the cytoplasm. It catalyses the reaction tRNA(Ala) + L-alanine + ATP = L-alanyl-tRNA(Ala) + AMP + diphosphate. Catalyzes the attachment of alanine to tRNA(Ala) in a two-step reaction: alanine is first activated by ATP to form Ala-AMP and then transferred to the acceptor end of tRNA(Ala). Also edits incorrectly charged Ser-tRNA(Ala) and Gly-tRNA(Ala) via its editing domain. In Lactiplantibacillus plantarum (strain ATCC BAA-793 / NCIMB 8826 / WCFS1) (Lactobacillus plantarum), this protein is Alanine--tRNA ligase (alaS).